The chain runs to 487 residues: Keratin, type I cytoskeletal 12 (487 aa).

The interval 1–118 is head; sequence MSLSVCTSAL…GNDGGLLSGS (118 aa). Positions 119 to 154 are coil 1A; it reads EKETMQNLNDRLASYLGKVRSLEEANAELENKIREW. One can recognise an IF rod domain in the interval 119 to 433; sequence EKETMQNLND…RLLEGDSQGD (315 aa). Residues 158–175 form a linker 1 region; that stretch reads RRTRDAGSQSDYSKYYPL. Residues 176 to 267 form a coil 1B region; the sequence is IEDLKNKIVS…KNHEEELQSF (92 aa). Residues 268–290 are linker 12; that stretch reads QAGGPGEVNVEMDAAPGVDLTKV. Positions 291-428 are coil 2; sequence LNEMRAQYEA…IETYRRLLEG (138 aa). The segment at 428-461 is disordered; it reads GDSQGDGFDESSSLSVSKPQTPSVDSSKDPNKTR. The segment at 429 to 487 is tail; that stretch reads DSQGDGFDESSSLSVSKPQTPSVDSSKDPNKTRKIKTVVQEIVNGEVVSSQVQELEEEM. The span at 437–452 shows a compositional bias: polar residues; that stretch reads ESSSLSVSKPQTPSVD.

Belongs to the intermediate filament family. Heterotetramer of two type I and two type II keratins. Keratin-3 associates with keratin-12. As to expression, expressed in the corneal epithelium (at protein level). Also expressed in the suprabasal limbal epithelium of the cornea (at protein level).

Involved in corneal epithelium organization, integrity and corneal keratin expression. The polypeptide is Keratin, type I cytoskeletal 12 (Krt12) (Mus musculus (Mouse)).